Here is an 809-residue protein sequence, read N- to C-terminus: Phenylalanine--tRNA ligase beta subunit (809 aa).

In terms of domain architecture, tRNA-binding spans 39 to 153; it reads APPFSQIVVG…EDTPVGADIR (115 aa). Residues 404-479 enclose the B5 domain; it reads PKREPVRMRV…RIYGFEQIPA (76 aa). The Mg(2+) site is built by Asp457, Asp463, Glu466, and Glu467. In terms of domain architecture, FDX-ACB spans 706-808; it reads PRVPAVTRDI…AGDAFGARLR (103 aa).

It belongs to the phenylalanyl-tRNA synthetase beta subunit family. Type 1 subfamily. As to quaternary structure, tetramer of two alpha and two beta subunits. Mg(2+) serves as cofactor.

It is found in the cytoplasm. The enzyme catalyses tRNA(Phe) + L-phenylalanine + ATP = L-phenylalanyl-tRNA(Phe) + AMP + diphosphate + H(+). This Ralstonia nicotianae (strain ATCC BAA-1114 / GMI1000) (Ralstonia solanacearum) protein is Phenylalanine--tRNA ligase beta subunit.